Consider the following 255-residue polypeptide: Indole-3-glycerol phosphate synthase (255 aa).

The protein belongs to the TrpC family.

It catalyses the reaction 1-(2-carboxyphenylamino)-1-deoxy-D-ribulose 5-phosphate + H(+) = (1S,2R)-1-C-(indol-3-yl)glycerol 3-phosphate + CO2 + H2O. The protein operates within amino-acid biosynthesis; L-tryptophan biosynthesis; L-tryptophan from chorismate: step 4/5. This chain is Indole-3-glycerol phosphate synthase, found in Streptococcus pneumoniae (strain Taiwan19F-14).